Consider the following 236-residue polypeptide: Orotidine 5'-phosphate decarboxylase (236 aa).

Substrate-binding positions include D17, K39, 66 to 75, T125, R187, Q196, G216, and R217; that span reads DLKFYDIPNT. The Proton donor role is filled by K68.

The protein belongs to the OMP decarboxylase family. Type 1 subfamily. In terms of assembly, homodimer.

The enzyme catalyses orotidine 5'-phosphate + H(+) = UMP + CO2. Its pathway is pyrimidine metabolism; UMP biosynthesis via de novo pathway; UMP from orotate: step 2/2. Its function is as follows. Catalyzes the decarboxylation of orotidine 5'-monophosphate (OMP) to uridine 5'-monophosphate (UMP). The polypeptide is Orotidine 5'-phosphate decarboxylase (Buchnera aphidicola subsp. Baizongia pistaciae (strain Bp)).